A 343-amino-acid polypeptide reads, in one-letter code: UPF0157 protein YqkA (343 aa).

Residues 8 to 144 form the N-acetyltransferase domain; that stretch reads KEATIAREIL…VKAAQGLLLS (137 aa). The interval 135-343 is UPF0157; that stretch reads VKAAQGLLLS…ENDENGGFTL (209 aa).

In the C-terminal section; belongs to the UPF0157 (GrpB) family.

This is UPF0157 protein YqkA (yqkA) from Bacillus subtilis (strain 168).